We begin with the raw amino-acid sequence, 175 residues long: Bifunctional protein PyrR (175 aa).

The short motif at 97 to 109 is the PRPP-binding element; sequence IVLIDDVLFTGRT.

It belongs to the purine/pyrimidine phosphoribosyltransferase family. PyrR subfamily. As to quaternary structure, homodimer and homohexamer; in equilibrium.

It carries out the reaction UMP + diphosphate = 5-phospho-alpha-D-ribose 1-diphosphate + uracil. Its function is as follows. Regulates transcriptional attenuation of the pyrimidine nucleotide (pyr) operon by binding in a uridine-dependent manner to specific sites on pyr mRNA. This disrupts an antiterminator hairpin in the RNA and favors formation of a downstream transcription terminator, leading to a reduced expression of downstream genes. In terms of biological role, also displays a weak uracil phosphoribosyltransferase activity which is not physiologically significant. This chain is Bifunctional protein PyrR, found in Leuconostoc mesenteroides subsp. mesenteroides (strain ATCC 8293 / DSM 20343 / BCRC 11652 / CCM 1803 / JCM 6124 / NCDO 523 / NBRC 100496 / NCIMB 8023 / NCTC 12954 / NRRL B-1118 / 37Y).